The chain runs to 238 residues: MTDTPENQTPNDLPAGHSRSIRSFVLRQSHMTAAQQRAIDTLWDSFGIDYQATPADLDARFGSSRPKILEIGFGMGMASAEIARRLPETDFLAIDVHGPGVGNLLKLINENHLENIRVMRHDAVEVVENMLQDGSLDGIHIFFPDPWHKKRHHKRRLIQAPFIAKLLPKLKTGGYIHLATDWEEYAQQMLEVLSSFDNLQNTAADYAPTPDYRPETKFEARGKRLGHGVWDLVFKRIG.

4 residues coordinate S-adenosyl-L-methionine: glutamate 70, aspartate 95, aspartate 122, and aspartate 145. Residue aspartate 145 is part of the active site. Substrate is bound by residues lysine 149, aspartate 181, and 216–219; that span reads TKFE.

This sequence belongs to the class I-like SAM-binding methyltransferase superfamily. TrmB family.

It carries out the reaction guanosine(46) in tRNA + S-adenosyl-L-methionine = N(7)-methylguanosine(46) in tRNA + S-adenosyl-L-homocysteine. It functions in the pathway tRNA modification; N(7)-methylguanine-tRNA biosynthesis. In terms of biological role, catalyzes the formation of N(7)-methylguanine at position 46 (m7G46) in tRNA. The protein is tRNA (guanine-N(7)-)-methyltransferase of Neisseria gonorrhoeae (strain ATCC 700825 / FA 1090).